The sequence spans 519 residues: PTS system mannitol-specific EIICB component (519 aa).

The Cytoplasmic segment spans residues 1-30 (MAQTETQEKKGLGRKVQAFGSFLSSMIMPN). In terms of domain architecture, PTS EIIC type-2 spans 19–351 (FGSFLSSMIM…MKFTKEPKQD (333 aa)). The helical transmembrane segment at 31-52 (IGAFIAWGFIAAIFIDNGWYPN) threads the bilayer. The Extracellular portion of the chain corresponds to 53-56 (KELS). The chain crosses the membrane as a helical span at residues 57–77 (QLAGPMITYLIPLLIAFSGGR). Over 78 to 141 (LIHDLRGGIV…QGFEMLFNNF (64 aa)) the chain is Cytoplasmic. A helical transmembrane segment spans residues 142 to 163 (SAGILAFIMTILGFKLLAPIMQ). The Extracellular portion of the chain corresponds to 164-172 (FIMHILSVA). A helical membrane pass occupies residues 173–193 (VEFLVHLHLLPIVSIIVEPAK). Residues 194–280 (ILFLNNAINH…VLMRPLLFIA (87 aa)) are Cytoplasmic-facing. A helical membrane pass occupies residues 281–300 (VILGGMTGVATYQATGFGFK). Over 301–320 (SPASPGSFIVYCLNAPKGEF) the chain is Extracellular. The chain crosses the membrane as a helical span at residues 321 to 342 (LHMVLGVFLAALVSFVVAALIM). Topologically, residues 343–519 (KFTKEPKQDL…NNLKKDQDKA (177 aa)) are cytoplasmic. Residues 366-406 (KSSVSSKLTGATTGTGAAGVAANKANGEDQNEASSEDEEED) form a disordered region. Positions 367–387 (SSVSSKLTGATTGTGAAGVAA) are enriched in low complexity. Positions 394–406 (DQNEASSEDEEED) are enriched in acidic residues. In terms of domain architecture, PTS EIIB type-2 spans 425–519 (DHVIFACDAG…NNLKKDQDKA (95 aa)). The active-site Phosphocysteine intermediate; for EIIB activity is Cys-431. Residue Cys-431 is modified to Phosphocysteine; by EIIA.

Homodimer.

The protein localises to the cell membrane. It catalyses the reaction D-mannitol(out) + N(pros)-phospho-L-histidyl-[protein] = D-mannitol 1-phosphate(in) + L-histidyl-[protein]. The phosphoenolpyruvate-dependent sugar phosphotransferase system (sugar PTS), a major carbohydrate active transport system, catalyzes the phosphorylation of incoming sugar substrates concomitantly with their translocation across the cell membrane. The enzyme II CmtAB PTS system is involved in D-mannitol transport. The sequence is that of PTS system mannitol-specific EIICB component (mtlA) from Staphylococcus haemolyticus (strain JCSC1435).